The primary structure comprises 208 residues: Heat shock protein 26 (208 aa).

Phosphoserine occurs at positions 44, 52, and 58. In terms of domain architecture, sHSP spans 71–179 (ANRNDIHWPA…KSKERIIQIQ (109 aa)). The tract at residues 187–208 (NVKANESEVKGKENGAPNGKDK) is disordered. Residues 191–208 (NESEVKGKENGAPNGKDK) are compositionally biased toward basic and acidic residues.

Belongs to the small heat shock protein (HSP20) family.

The sequence is that of Heat shock protein 26 (Hsp26) from Drosophila melanogaster (Fruit fly).